Here is a 313-residue protein sequence, read N- to C-terminus: Pyrimidine-specific ribonucleoside hydrolase RihB (313 aa).

Asp-11 serves as the catalytic Proton acceptor. 3 residues coordinate Ca(2+): Asp-11, Asp-16, and Val-124. Substrate contacts are provided by Gln-227 and His-239. Asp-240 provides a ligand contact to Ca(2+).

Belongs to the IUNH family. RihB subfamily. As to quaternary structure, homotetramer. Requires Ca(2+) as cofactor.

It catalyses the reaction a pyrimidine ribonucleoside + H2O = a pyrimidine nucleobase + D-ribose. Hydrolyzes cytidine or uridine to ribose and cytosine or uracil, respectively. Has a clear preference for cytidine over uridine. Strictly specific for ribonucleosides. This is Pyrimidine-specific ribonucleoside hydrolase RihB from Escherichia coli (strain K12 / DH10B).